Here is a 1259-residue protein sequence, read N- to C-terminus: Clustered mitochondria protein homolog (1259 aa).

The segment covering 1–27 (MSQTNGNMEHSKETPQSQEVEQLTNGN) has biased composition (polar residues). The interval 1–38 (MSQTNGNMEHSKETPQSQEVEQLTNGNHPEEQQEEEEN) is disordered. Residues 324–568 (DITRSQESYL…RVTPLDVMWQ (245 aa)) form the Clu domain. Composition is skewed to basic and acidic residues over residues 612-628 (AEAEKEKPAESSESKEQ) and 634-647 (TEEKTEESSDQERV). 2 disordered regions span residues 612 to 647 (AEAEKEKPAESSESKEQDSEEKTEEKTEESSDQERV) and 881 to 908 (VVNGANNAAQDEGKKKKKKGADKSPSRA). 3 TPR repeats span residues 982–1015 (AKLYHQLSMLYYQTDEKEAAVELARKAVIVTERT), 1024–1057 (ILAYLNLSLFEHASGNTKTALVYIKHAMDLWKII), and 1066–1099 (ITTMNNAAVMLQHLKQYADSRKWFEASLSVCESL). 2 disordered regions span residues 1192-1215 (TKVQPQVGQTAPEASGAKNAANAS) and 1229-1259 (EGGDTSSSRSKQKKRAAASNPKLRGSKKSSA).

It belongs to the CLU family. As to quaternary structure, may associate with the eukaryotic translation initiation factor 3 (eIF-3) complex.

The protein resides in the cytoplasm. In terms of biological role, mRNA-binding protein involved in proper cytoplasmic distribution of mitochondria. The polypeptide is Clustered mitochondria protein homolog (Aspergillus clavatus (strain ATCC 1007 / CBS 513.65 / DSM 816 / NCTC 3887 / NRRL 1 / QM 1276 / 107)).